Here is a 304-residue protein sequence, read N- to C-terminus: Recombination-associated protein RdgC (304 aa).

Belongs to the RdgC family.

It localises to the cytoplasm. It is found in the nucleoid. Functionally, may be involved in recombination. This chain is Recombination-associated protein RdgC, found in Shewanella sp. (strain ANA-3).